The sequence spans 190 residues: Probable GTP-binding protein EngB (190 aa).

The EngB-type G domain occupies 22-190 (VKREVAFAGR…LNELLKILIP (169 aa)). GTP contacts are provided by residues 30 to 37 (GRSNVGKS), 56 to 60 (GKTRS), 74 to 77 (DLPG), 141 to 144 (TKTD), and 173 to 175 (FSA). Positions 37 and 58 each coordinate Mg(2+).

Belongs to the TRAFAC class TrmE-Era-EngA-EngB-Septin-like GTPase superfamily. EngB GTPase family. Requires Mg(2+) as cofactor.

Functionally, necessary for normal cell division and for the maintenance of normal septation. The chain is Probable GTP-binding protein EngB from Kosmotoga olearia (strain ATCC BAA-1733 / DSM 21960 / TBF 19.5.1).